A 151-amino-acid polypeptide reads, in one-letter code: MPHRSRHKKGRSSSVRPPHPTVPTWIQYTPEEVEQLAVELARRGFPPSQIGIILRDQYGIPLVKPITGKKLTKILEEHGIKQELPEDLLNLIRRALRIRKHLEEHPKDMASRRGLQLVESKIHRLIKYYKRVGKIPQDFVYNPEALSHLAT.

Residues 1–11 (MPHRSRHKKGR) show a composition bias toward basic residues. The tract at residues 1–24 (MPHRSRHKKGRSSSVRPPHPTVPT) is disordered.

It belongs to the universal ribosomal protein uS15 family. As to quaternary structure, part of the 30S ribosomal subunit.

This is Small ribosomal subunit protein uS15 from Pyrobaculum calidifontis (strain DSM 21063 / JCM 11548 / VA1).